The primary structure comprises 404 residues: Phosphoglycerate kinase (404 aa).

Residues 22-24 (DLN), R37, 60-63 (HLGR), R119, and R156 contribute to the substrate site. Residues K206, G302, E333, and 359–362 (GGDS) each bind ATP.

The protein belongs to the phosphoglycerate kinase family. In terms of assembly, monomer.

It localises to the cytoplasm. It catalyses the reaction (2R)-3-phosphoglycerate + ATP = (2R)-3-phospho-glyceroyl phosphate + ADP. It participates in carbohydrate degradation; glycolysis; pyruvate from D-glyceraldehyde 3-phosphate: step 2/5. The polypeptide is Phosphoglycerate kinase (Clavibacter sepedonicus (Clavibacter michiganensis subsp. sepedonicus)).